The following is a 279-amino-acid chain: Putative pyruvate, phosphate dikinase regulatory protein (279 aa).

Position 153 to 160 (153 to 160 (GISRTSKT)) interacts with ADP.

Belongs to the pyruvate, phosphate/water dikinase regulatory protein family. PDRP subfamily.

The catalysed reaction is N(tele)-phospho-L-histidyl/L-threonyl-[pyruvate, phosphate dikinase] + ADP = N(tele)-phospho-L-histidyl/O-phospho-L-threonyl-[pyruvate, phosphate dikinase] + AMP + H(+). The enzyme catalyses N(tele)-phospho-L-histidyl/O-phospho-L-threonyl-[pyruvate, phosphate dikinase] + phosphate + H(+) = N(tele)-phospho-L-histidyl/L-threonyl-[pyruvate, phosphate dikinase] + diphosphate. Its function is as follows. Bifunctional serine/threonine kinase and phosphorylase involved in the regulation of the pyruvate, phosphate dikinase (PPDK) by catalyzing its phosphorylation/dephosphorylation. The chain is Putative pyruvate, phosphate dikinase regulatory protein from Brucella melitensis biotype 2 (strain ATCC 23457).